A 175-amino-acid chain; its full sequence is Disulfide bond formation protein B (175 aa).

Over 1 to 13 the chain is Cytoplasmic; sequence MTAFTRFAHSRAS. Residues 14–30 form a helical membrane-spanning segment; sequence WFILTGSAIALEAAALY. Residues 31 to 48 are Periplasmic-facing; that stretch reads FQYVMKLDPCVMCIYQRL. Cysteines 40 and 43 form a disulfide. The helical transmembrane segment at 49-64 threads the bilayer; the sequence is AVFGILASGLIGMTAP. The Cytoplasmic portion of the chain corresponds to 65-71; sequence KFLIVRI. The chain crosses the membrane as a helical span at residues 72–89; it reads LGAIGWAVSATWGLKLAL. At 90 to 144 the chain is on the periplasmic side; sequence ALVDMQNNPSPFSTCSFLPEFPAWMPLHEWFPSVMLPTGMCTDVPWQFMGVTMAE. Cysteines 104 and 130 form a disulfide. Residues 145–163 form a helical membrane-spanning segment; the sequence is WMVVAFSGYLVALLLFIVP. Topologically, residues 164 to 175 are cytoplasmic; it reads ILSGSNKPSLYK.

It belongs to the DsbB family.

It is found in the cell inner membrane. Its function is as follows. Required for disulfide bond formation in some periplasmic proteins. Acts by oxidizing the DsbA protein. The polypeptide is Disulfide bond formation protein B (Shewanella sp. (strain ANA-3)).